The following is a 518-amino-acid chain: uncharacterized protein (518 aa).

Positions 1 to 21 (MWKWKVILLFLAEMFVSGVNG) are cleaved as a signal peptide. Asparagine 30, asparagine 142, asparagine 295, asparagine 342, asparagine 362, asparagine 410, and asparagine 503 each carry an N-linked (GlcNAc...) asparagine glycan. The CUB domain maps to 389–517 (CPPFGITNSV…RGFWVSITPQ (129 aa)).

Its subcellular location is the secreted. This is an uncharacterized protein from Caenorhabditis elegans.